An 873-amino-acid polypeptide reads, in one-letter code: Aminopeptidase M1-D (873 aa).

Residues 96 to 203 form a required for membrane association region; the sequence is LGEGVLAMRF…MSTYLVAIVV (108 aa). Residues Glu136 and 269 to 273 contribute to the substrate site; that span reads GAMEN. A Zn(2+)-binding site is contributed by His305. The Proton acceptor role is filled by Glu306. His309 and Glu328 together coordinate Zn(2+). The Dileucine internalization motif signature appears at 721-722; it reads LL.

The protein belongs to the peptidase M1 family. In terms of assembly, homodimer. Zn(2+) is required as a cofactor.

Its subcellular location is the membrane. The protein resides in the microsome membrane. It is found in the cytoplasm. The enzyme catalyses Release of an N-terminal amino acid, Xaa-|-Yaa- from a peptide, amide or arylamide. Xaa is preferably Ala, but may be most amino acids including Pro (slow action). When a terminal hydrophobic residue is followed by a prolyl residue, the two may be released as an intact Xaa-Pro dipeptide.. This chain is Aminopeptidase M1-D, found in Oryza sativa subsp. japonica (Rice).